Consider the following 170-residue polypeptide: Peptide deformylase (170 aa).

Residues cysteine 91 and histidine 133 each coordinate Fe cation. Residue glutamate 134 is part of the active site. Histidine 137 is a binding site for Fe cation.

The protein belongs to the polypeptide deformylase family. Requires Fe(2+) as cofactor.

It carries out the reaction N-terminal N-formyl-L-methionyl-[peptide] + H2O = N-terminal L-methionyl-[peptide] + formate. Its function is as follows. Removes the formyl group from the N-terminal Met of newly synthesized proteins. Requires at least a dipeptide for an efficient rate of reaction. N-terminal L-methionine is a prerequisite for activity but the enzyme has broad specificity at other positions. The chain is Peptide deformylase from Pasteurella multocida (strain Pm70).